We begin with the raw amino-acid sequence, 124 residues long: Small ribosomal subunit protein bS6 (124 aa).

The protein belongs to the bacterial ribosomal protein bS6 family.

Binds together with bS18 to 16S ribosomal RNA. The sequence is that of Small ribosomal subunit protein bS6 from Actinobacillus pleuropneumoniae serotype 5b (strain L20).